A 418-amino-acid polypeptide reads, in one-letter code: Probable endo-beta-1,4-glucanase celB (418 aa).

The signal sequence occupies residues 1-18 (MVRTFAVTALALLPLVAA). 3 N-linked (GlcNAc...) asparagine glycosylation sites follow: Asn46, Asn118, and Asn136. Glu215 acts as the Nucleophile in catalysis. Residue Glu220 is the Proton donor of the active site. Residues Asn234 and Asn291 are each glycosylated (N-linked (GlcNAc...) asparagine).

The protein belongs to the glycosyl hydrolase 7 (cellulase C) family.

The protein localises to the secreted. The enzyme catalyses Endohydrolysis of (1-&gt;4)-beta-D-glucosidic linkages in cellulose, lichenin and cereal beta-D-glucans.. Its function is as follows. Has endoglucanase activity on substrates containing beta-1,4 glycosidic bonds, like in carboxymethylcellulose (CMC), hydroxyethylcellulose (HEC) and beta-glucan. Involved in the degradation of complex natural cellulosic substrates. This chain is Probable endo-beta-1,4-glucanase celB (celB), found in Aspergillus clavatus (strain ATCC 1007 / CBS 513.65 / DSM 816 / NCTC 3887 / NRRL 1 / QM 1276 / 107).